Consider the following 467-residue polypeptide: UDP-glycosyltransferase 90A2 (467 aa).

Residues serine 289, 341-343 (VDQ), 358-366 (HCGWNSLTE), and 380-383 (AAEQ) contribute to the UDP-alpha-D-glucose site.

Belongs to the UDP-glycosyltransferase family.

This Arabidopsis thaliana (Mouse-ear cress) protein is UDP-glycosyltransferase 90A2 (UGT90A2).